Consider the following 929-residue polypeptide: SED5-binding protein 3 (929 aa).

S15 carries the post-translational modification Phosphoserine. Positions E18–S28 are enriched in polar residues. The interval E18 to S52 is disordered. The segment covering K29–Y38 has biased composition (basic residues). The span at N40–S52 shows a compositional bias: polar residues. The residue at position 72 (T72) is a Phosphothreonine. Phosphoserine occurs at positions 83, 85, 94, 101, and 110. At T216 the chain carries Phosphothreonine. Positions C220–C244 are zinc finger-like.

The protein belongs to the SEC23/SEC24 family. SEC24 subfamily. COPII is composed of at least five proteins: the SEC23/24 complex, the SEC13/31 complex and SAR1. Binds to SED5. Interacts with GHR1.

Its subcellular location is the cytoplasm. It is found in the golgi apparatus membrane. The protein localises to the endoplasmic reticulum membrane. Component of the COPII coat, that covers ER-derived vesicles involved in transport from the endoplasmic reticulum to the Golgi apparatus. COPII acts in the cytoplasm to promote the transport of secretory, plasma membrane, and vacuolar proteins from the endoplasmic reticulum to the Golgi complex. The chain is SED5-binding protein 3 (SFB3) from Saccharomyces cerevisiae (strain ATCC 204508 / S288c) (Baker's yeast).